A 166-amino-acid polypeptide reads, in one-letter code: Phospholipase A2 inhibitor A1 (166 aa).

Positions 1–19 are cleaved as a signal peptide; that stretch reads MRLILLSGLLLLGIFLANG. The region spanning 46–161 is the C-type lectin domain; it reads LKGSFLIVHK…CDDNLLVVCE (116 aa). 2 disulfide bridges follow: cysteine 83-cysteine 160 and cysteine 138-cysteine 152. A glycan (N-linked (GlcNAc...) asparagine) is linked at asparagine 122.

The protein belongs to the alpha-type phospholipase A2 inhibitor family. As to quaternary structure, homotrimer; non-covalently linked. In terms of tissue distribution, expressed by the liver.

It localises to the secreted. Its function is as follows. This phospholipase A2 inhibitor binds directly phospholipase A2 in the presence or absence of calcium. The sequence is that of Phospholipase A2 inhibitor A1 from Bothrops neuwiedi (Neuwied's lancehead).